Here is a 196-residue protein sequence, read N- to C-terminus: Chromophore lyase CpcT/CpeT (196 aa).

This sequence belongs to the CpcT/CpeT biliprotein lyase family.

Covalently attaches a chromophore to Cys residue(s) of phycobiliproteins. The protein is Chromophore lyase CpcT/CpeT of Synechocystis sp. (strain ATCC 27184 / PCC 6803 / Kazusa).